A 1140-amino-acid polypeptide reads, in one-letter code: DNA damage-binding protein 1 (1140 aa).

It belongs to the DDB1 family. Component of the UV-DDB complex which includes DDB1 and DDB2; the heterodimer dimerizes to give rise to a heterotetramer when bound to damaged DNA. The UV-DDB complex interacts with monoubiquitinated histone H2A and binds to XPC via the DDB2 subunit. Component of numerous DCX (DDB1-CUL4-X-box) E3 ubiquitin-protein ligase complexes which consist of a core of DDB1, CUL4A or CUL4B and RBX1. DDB1 may recruit specific substrate targeting subunits to the DCX complex. These substrate targeting subunits are generally known as DCAF (DDB1- and CUL4-associated factor) or CDW (CUL4-DDB1-associated WD40-repeat) proteins. Interacts with Fbw5 and gig. May interact with ohgt.

The protein localises to the cytoplasm. It is found in the nucleus. It participates in protein modification; protein ubiquitination. Its function is as follows. Protein, which is both involved in DNA repair and protein ubiquitination, as part of the UV-DDB complex and DCX (DDB1-CUL4-X-box) complexes, respectively. Core component of the UV-DDB complex (UV-damaged DNA-binding protein complex), a complex that recognizes UV-induced DNA damage and recruit proteins of the nucleotide excision repair pathway (the NER pathway) to initiate DNA repair. The UV-DDB complex preferentially binds to cyclobutane pyrimidine dimers (CPD), 6-4 photoproducts (6-4 PP), apurinic sites and short mismatches. Also functions as a component of numerous distinct DCX (DDB1-CUL4-X-box) E3 ubiquitin-protein ligase complexes which mediate the ubiquitination and subsequent proteasomal degradation of target proteins. The functional specificity of the DCX E3 ubiquitin-protein ligase complex is determined by the variable substrate recognition component recruited by DDB1. Required for degradation of gig. Required for genomic stability in the face of endogenous DNA lesions and for the response to MMS-induced DNA damage. Required for normal wing development. The polypeptide is DNA damage-binding protein 1 (pic) (Drosophila melanogaster (Fruit fly)).